A 439-amino-acid chain; its full sequence is S-layer protein (439 aa).

The N-terminal stretch at 1–30 (MKKNLRIVSAAAAALLAVAPIAATAMPVNA) is a signal peptide.

Glycosylated.

The protein resides in the secreted. It localises to the cell wall. The protein localises to the S-layer. Functionally, the S-layer is a paracrystalline mono-layered assembly of proteins which coat the surface of bacteria. This is S-layer protein (slpH) from Lactobacillus helveticus (Lactobacillus suntoryeus).